The sequence spans 356 residues: MTGYHALRRVLFLISPERIHTWVFALLRAVTTPDLLRRALQGRLAPRDPVLASTVFGVRFPGPLGLAAGFDKDGRGLHTWPALGFGYAEVGTVTAHPQPGNPEPRLFRLPEDRALLNRMGFNNDGAARLAQRLTRHTSDAPVGVNIGKTKATPADRAVEDYAQSARQLGPLATFLVVNVSSPNTPGLRDLQAVESLRPILTAVRAQTSTPVLVKIAPDLSDADVDEIADLAVELGLAGIVATNTTISRAGLKTPGVEELGPGGVSGAPVAARSLEVLRRLYRRAGDRLVLISVGGIETADDAWERITSGASLLQGYTGFVYGGGLWAKHIHDGLATRLRAEGFTSLSDAVGSAMRQ.

Residues 68 to 72 (AGFDK) and Thr92 contribute to the FMN site. Position 72 (Lys72) interacts with substrate. Residue 117 to 121 (NRMGF) participates in substrate binding. The FMN site is built by Asn145 and Asn178. Asn178 contacts substrate. The active-site Nucleophile is the Ser181. Asn183 serves as a coordination point for substrate. FMN contacts are provided by Lys214 and Thr242. 243–244 (NT) is a substrate binding site. FMN contacts are provided by residues Gly266, Gly295, and 316 to 317 (YT).

The protein belongs to the dihydroorotate dehydrogenase family. Type 2 subfamily. Monomer. FMN serves as cofactor.

The protein resides in the cell membrane. It carries out the reaction (S)-dihydroorotate + a quinone = orotate + a quinol. It functions in the pathway pyrimidine metabolism; UMP biosynthesis via de novo pathway; orotate from (S)-dihydroorotate (quinone route): step 1/1. Catalyzes the conversion of dihydroorotate to orotate with quinone as electron acceptor. The sequence is that of Dihydroorotate dehydrogenase (quinone) from Mycobacterium sp. (strain KMS).